The primary structure comprises 222 residues: Pre-mRNA cleavage factor Im 25 kDa subunit 1 (222 aa).

The 128-residue stretch at 67-194 (GLRTCVEAVL…KLLAVPLCQL (128 aa)) folds into the Nudix hydrolase domain. The segment at 94 to 96 (SIF) is interaction with RNA. The short motif at 101-122 (GRLRPGESDIEGLKRKLASKLS) is the Nudix box element.

Belongs to the Nudix hydrolase family. CPSF5 subfamily. In terms of assembly, homodimer. Component of the cleavage factor Im (CFIm) complex. Forms a complex with cleavage and polyadenylation specificity factor (CPSF) subunits FIPS5.

The protein localises to the nucleus. Functionally, component of the cleavage factor Im (CFIm) complex that plays a key role in pre-mRNA 3'-processing. Involved in association with CPSF6 or CPSF7 in pre-MRNA 3'-end poly(A) site cleavage and poly(A) addition. NUDT21/CPSF5 binds to cleavage and polyadenylation RNA substrates. The homodimer mediates simultaneous sequence-specific recognition of two 5'-UGUA-3' elements within the pre-mRNA. Binds to, but does not hydrolyze mono- and di-adenosine nucleotides. May have a role in mRNA export. This is Pre-mRNA cleavage factor Im 25 kDa subunit 1 from Arabidopsis thaliana (Mouse-ear cress).